The primary structure comprises 809 residues: Acyl-homoserine lactone acylase QuiP (809 aa).

Positions 1–26 (MASPAFSHFLPRFGVAAAVASALSLA) are cleaved as a signal peptide. Catalysis depends on Ser-261, which acts as the Nucleophile.

It belongs to the peptidase S45 family. As to quaternary structure, heterodimer of an alpha subunit and a beta subunit processed from the same precursor.

The protein resides in the periplasm. It catalyses the reaction an N-acyl-L-homoserine lactone + H2O = L-homoserine lactone + a carboxylate. Its function is as follows. Catalyzes the deacylation of acyl-homoserine lactone (AHL or acyl-HSL), releasing homoserine lactone (HSL) and the corresponding fatty acid. Possesses a specificity for the degradation of long-chain acyl-HSLs (side chains of seven or more carbons in length). This Pseudomonas fluorescens (strain ATCC BAA-477 / NRRL B-23932 / Pf-5) protein is Acyl-homoserine lactone acylase QuiP (quiP).